A 181-amino-acid chain; its full sequence is MACGATLKRTIEFDPLLSPAASPKRRRCAPLSPSGPSPQKYLRLEPSPFGEVSPRLTAEQILYNIKQEYKRMQKRRHLESSFQPTDPCCSSEGQPQTFIPSGPTLPGTSATSPLRKEQPLFSLRQVGMICERLLKEREDNVREEYEEILTTKLAEQYDAFVKFTHDQIMRRFGEQPASYVS.

The disordered stretch occupies residues 18-48 (SPAASPKRRRCAPLSPSGPSPQKYLRLEPSP). Residues 23 to 28 (PKRRRC) carry the Nuclear localization signal motif. The SYVS motif motif lies at 178-181 (SYVS).

The protein belongs to the akirin family. In terms of assembly, homodimer. Interacts with actl6a/baf53a. Interacts with gmnn.

It localises to the nucleus. Its function is as follows. Molecular adapter that acts as a bridge between a variety of multiprotein complexes, and which is involved in embryonic development, immunity, myogenesis and brain development. Plays a key role in nuclear protein degradation by promoting import of proteasomes into the nucleus: acts by bridging fully assembled 20S proteasomes with nuclear import receptor ipo9. Involved in both neural precursor maintenance and terminal neural differentiation: bridges gmnn and actl6a/baf53a in neural progenitor cells, antagonizing the activity of gmnn, thereby suppressing sox2 expression. Also required for proper activation of neurod1 and neuronal differentiation. Involved in myogenesis: required for skeletal muscle formation and skeletal development, possibly by regulating expression of muscle differentiation factors. The polypeptide is Akirin-2 (Xenopus laevis (African clawed frog)).